The following is a 336-amino-acid chain: Putative ataxin-3 homolog (336 aa).

Residues 10–193 (GGLLYHEVQE…KECPMATEGS (184 aa)) form the Josephin domain. The Nucleophile role is filled by C23. H132 acts as the Proton acceptor in catalysis. N147 is a catalytic residue. The region spanning 244–263 (QEEADLNAAIAASLMDTGGP) is the UIM domain. Residues 281–336 (IESTSGEMSKDGNLEEQGANKSETSEPNSDNIESASGSNPKQNTTSLEGKESIKED) are disordered. The segment covering 299–327 (ANKSETSEPNSDNIESASGSNPKQNTTSL) has biased composition (polar residues).

It is found in the nucleus. It catalyses the reaction Thiol-dependent hydrolysis of ester, thioester, amide, peptide and isopeptide bonds formed by the C-terminal Gly of ubiquitin (a 76-residue protein attached to proteins as an intracellular targeting signal).. In terms of biological role, interacts with key regulators of transcription and represses transcription. Acts as a histone-binding protein that regulates transcription. Acts as a deubiquitinating enzyme. This Oryza sativa subsp. japonica (Rice) protein is Putative ataxin-3 homolog.